Here is a 224-residue protein sequence, read N- to C-terminus: Ribosomal RNA large subunit methyltransferase E (224 aa).

Glycine 64, tryptophan 66, aspartate 97, aspartate 113, and aspartate 138 together coordinate S-adenosyl-L-methionine. The active-site Proton acceptor is the lysine 178.

Belongs to the class I-like SAM-binding methyltransferase superfamily. RNA methyltransferase RlmE family.

The protein resides in the cytoplasm. It carries out the reaction uridine(2552) in 23S rRNA + S-adenosyl-L-methionine = 2'-O-methyluridine(2552) in 23S rRNA + S-adenosyl-L-homocysteine + H(+). Functionally, specifically methylates the uridine in position 2552 of 23S rRNA at the 2'-O position of the ribose in the fully assembled 50S ribosomal subunit. This Albidiferax ferrireducens (strain ATCC BAA-621 / DSM 15236 / T118) (Rhodoferax ferrireducens) protein is Ribosomal RNA large subunit methyltransferase E.